We begin with the raw amino-acid sequence, 602 residues long: Elongation factor 4 (602 aa).

In terms of domain architecture, tr-type G spans 7 to 189; that stretch reads KFIRNFSIIA…QLVVAIPPPV (183 aa). Residues 19-24 and 136-139 each bind GTP; these read DHGKST and NKID.

Belongs to the TRAFAC class translation factor GTPase superfamily. Classic translation factor GTPase family. LepA subfamily.

The protein resides in the cell inner membrane. It catalyses the reaction GTP + H2O = GDP + phosphate + H(+). Functionally, required for accurate and efficient protein synthesis under certain stress conditions. May act as a fidelity factor of the translation reaction, by catalyzing a one-codon backward translocation of tRNAs on improperly translocated ribosomes. Back-translocation proceeds from a post-translocation (POST) complex to a pre-translocation (PRE) complex, thus giving elongation factor G a second chance to translocate the tRNAs correctly. Binds to ribosomes in a GTP-dependent manner. This Coxiella burnetii (strain RSA 493 / Nine Mile phase I) protein is Elongation factor 4.